Consider the following 276-residue polypeptide: Adenylate kinase (276 aa).

38–43 is a binding site for ATP; that stretch reads GSGKGT. Positions 58–87 are NMP; sequence STGDMLRAAIEQGTETGKQAKTIMDQGGLV. AMP is bound by residues T59, R64, 85–87, 113–116, and Q120; these read GLV and GFPR. Residues 154-191 form an LID region; sequence GRLVHPSSGRSYHREFFPPKVDMIDDITGEPLIQRSDD. ATP-binding positions include R155 and 164 to 165; that span reads SY. The AMP site is built by R188 and R199. Residue K227 coordinates ATP.

The protein belongs to the adenylate kinase family. AK2 subfamily. In terms of assembly, monomer.

The protein localises to the cytoplasm. The protein resides in the cytosol. Its subcellular location is the mitochondrion intermembrane space. It carries out the reaction AMP + ATP = 2 ADP. In terms of biological role, catalyzes the reversible transfer of the terminal phosphate group between ATP and AMP. Plays an important role in cellular energy homeostasis and in adenine nucleotide metabolism. Adenylate kinase activity is critical for regulation of the phosphate utilization and the AMP de novo biosynthesis pathways. In Dictyostelium discoideum (Social amoeba), this protein is Adenylate kinase (adkA).